The chain runs to 50 residues: Protein hunchback (50 aa).

C2H2-type zinc fingers lie at residues histidine 1 to histidine 5, phenylalanine 11 to histidine 33, and tyrosine 39 to tyrosine 50.

The protein belongs to the hunchback C2H2-type zinc-finger protein family.

The protein resides in the nucleus. Functionally, gap class segmentation protein that controls development of head structures. This chain is Protein hunchback (hb), found in Platynereis dumerilii (Dumeril's clam worm).